The primary structure comprises 72 residues: Small ribosomal subunit protein bS18 (72 aa).

This sequence belongs to the bacterial ribosomal protein bS18 family. Part of the 30S ribosomal subunit. Forms a tight heterodimer with protein bS6.

Its function is as follows. Binds as a heterodimer with protein bS6 to the central domain of the 16S rRNA, where it helps stabilize the platform of the 30S subunit. This chain is Small ribosomal subunit protein bS18, found in Francisella tularensis subsp. novicida (strain U112).